Consider the following 62-residue polypeptide: Large ribosomal subunit protein uL30 (62 aa).

This sequence belongs to the universal ribosomal protein uL30 family. As to quaternary structure, part of the 50S ribosomal subunit.

This Geobacillus kaustophilus (strain HTA426) protein is Large ribosomal subunit protein uL30.